The sequence spans 583 residues: Ankyrin repeat-containing protein NPR4 (583 aa).

ANK repeat units follow at residues 68–97 (HNDT…AAVA), 119–148 (AGET…AEGV), 154–183 (SGYD…LLAK), 188–218 (ANTS…GLVE), 223–252 (NGKN…QLAR), 257–286 (KGQT…AIVM), and 291–321 (NGNT…HVNA). 4 helical membrane passes run 414–434 (VTVV…TVPG), 452–472 (IFFI…VVQI), 492–512 (LMWL…YIVL), and 518–538 (WAAL…LGTM).

The protein localises to the cell membrane. Its function is as follows. Involved in salt stress tolerance. The sequence is that of Ankyrin repeat-containing protein NPR4 from Oryza sativa subsp. japonica (Rice).